The following is a 202-amino-acid chain: Small ribosomal subunit protein uS4c (202 aa).

A disordered region spans residues 13-37 (RRPGVSPGLTSKTLKSKSNYIDRST). Polar residues predominate over residues 20–37 (GLTSKTLKSKSNYIDRST). The S4 RNA-binding domain occupies 90–153 (MRLDNTIFRL…ESRSMISKNI (64 aa)).

Belongs to the universal ribosomal protein uS4 family. In terms of assembly, part of the 30S ribosomal subunit. Contacts protein S5. The interaction surface between S4 and S5 is involved in control of translational fidelity.

The protein resides in the plastid. The protein localises to the chloroplast. In terms of biological role, one of the primary rRNA binding proteins, it binds directly to 16S rRNA where it nucleates assembly of the body of the 30S subunit. Its function is as follows. With S5 and S12 plays an important role in translational accuracy. The protein is Small ribosomal subunit protein uS4c (rps4) of Takakia lepidozioides (Moss).